Reading from the N-terminus, the 146-residue chain is Hemoglobin subunit beta (146 aa).

An N-acetylvaline modification is found at Val-1. The region spanning 2–146 (HLTDAEKAAV…VATALAHKYH (145 aa)) is the Globin domain. Ser-44 is subject to Phosphoserine. Position 59 is an N6-acetyllysine (Lys-59). His-63 is a heme b binding site. Lys-82 is subject to N6-acetyllysine. His-92 provides a ligand contact to heme b. S-nitrosocysteine is present on Cys-93. N6-acetyllysine is present on Lys-144.

The protein belongs to the globin family. As to quaternary structure, heterotetramer of two alpha chains and two beta chains. In terms of tissue distribution, red blood cells.

Its function is as follows. Involved in oxygen transport from the lung to the various peripheral tissues. This chain is Hemoglobin subunit beta (HBB), found in Spalax ehrenbergi (Middle East blind mole rat).